A 309-amino-acid polypeptide reads, in one-letter code: Pyridoxal kinase (309 aa).

Thr2 bears the N-acetylthreonine; in Pyridoxal kinase, N-terminally processed mark. Residues Ser23 and Thr58 each contribute to the pyridoxal site. Thr58 contributes to the pyridoxal 5'-phosphate binding site. Residue Asp124 coordinates ATP. A Na(+)-binding site is contributed by Asp124. Asp129 provides a ligand contact to Mg(2+). Na(+) is bound at residue Thr155. ATP is bound by residues 157–160, 193–194, 225–227, and Thr232; these read NQFE, TS, and IPA. Thr193 contacts Na(+). 233-234 provides a ligand contact to pyridoxal 5'-phosphate; sequence GD. Asp234 functions as the Proton acceptor in the catalytic mechanism.

It belongs to the pyridoxine kinase family. In terms of assembly, homodimer. Requires Zn(2+) as cofactor. As to expression, expressed ubiquitously in leaves, stems, roots, flowers and siliques. Present in root hairs and other tip-growing cells such as papillar cells on the top of stigma.

The catalysed reaction is pyridoxal + ATP = pyridoxal 5'-phosphate + ADP + H(+). It participates in cofactor metabolism; pyridoxal 5'-phosphate salvage; pyridoxal 5'-phosphate from pyridoxal: step 1/1. Its function is as follows. Catalyzes the transfer of a phosphate group from ATP to the 5-hydroxylmethyl group of pyridoxal to form the biologically active pyridoxal phosphate, an active form of vitamin B6. Required for Na(+) and K(+) homeostasis and for salt tolerance. Involved in root hair development, both for initiation and tip growth. This Arabidopsis thaliana (Mouse-ear cress) protein is Pyridoxal kinase.